We begin with the raw amino-acid sequence, 323 residues long: tRNA-dihydrouridine synthase B (323 aa).

Residues 16–18 and glutamine 70 each bind FMN; that span reads PMA. Residue cysteine 100 is the Proton donor of the active site. Residues lysine 139, 200–202, and 224–225 contribute to the FMN site; these read NGD and GR.

This sequence belongs to the Dus family. DusB subfamily. It depends on FMN as a cofactor.

The enzyme catalyses a 5,6-dihydrouridine in tRNA + NAD(+) = a uridine in tRNA + NADH + H(+). The catalysed reaction is a 5,6-dihydrouridine in tRNA + NADP(+) = a uridine in tRNA + NADPH + H(+). Catalyzes the synthesis of 5,6-dihydrouridine (D), a modified base found in the D-loop of most tRNAs, via the reduction of the C5-C6 double bond in target uridines. The sequence is that of tRNA-dihydrouridine synthase B from Proteus vulgaris.